Consider the following 256-residue polypeptide: MQIIPAIDLLGGSCVRLHQGDYDKVTRFSDDPVAQALQWQEQGAERLHLVDLDGARTGEPANDSAIRAITSALTIPVQLGGGVRTAERADTLLACGLDRVILGTVALEQPQLVVELADRHPGRVVVGIDARHGKVATKGWIEDSNTEATALAQRFSASAIAAIISTDISTDGTLEGPNLQALREMAEASSVPVIASGGVGCMGDLLALLTLEPLGVEAVIVGRALYDGRIDLGEARKALAESRLQDPPSDLLQDFA.

Aspartate 8 functions as the Proton acceptor in the catalytic mechanism. Aspartate 129 functions as the Proton donor in the catalytic mechanism.

It belongs to the HisA/HisF family.

The protein localises to the cytoplasm. It carries out the reaction 1-(5-phospho-beta-D-ribosyl)-5-[(5-phospho-beta-D-ribosylamino)methylideneamino]imidazole-4-carboxamide = 5-[(5-phospho-1-deoxy-D-ribulos-1-ylimino)methylamino]-1-(5-phospho-beta-D-ribosyl)imidazole-4-carboxamide. The protein operates within amino-acid biosynthesis; L-histidine biosynthesis; L-histidine from 5-phospho-alpha-D-ribose 1-diphosphate: step 4/9. The polypeptide is 1-(5-phosphoribosyl)-5-[(5-phosphoribosylamino)methylideneamino] imidazole-4-carboxamide isomerase (Synechococcus sp. (strain WH7803)).